Consider the following 278-residue polypeptide: MDIKSFEKIQLYGFNNLTKTLSFNIYDICYAKAPEQSKAYIAYIDEQYNAERLTKILSNVADITGANILSISKQDYDPQGASVTMLVAEEMTVPTLTPESLTGESPGPLPGNKPSPGSIVTHLDKSHVTVHTYPETHPLDGISTFRADIDVSTCGHISPIKALNYLIHSFESDIVTIDYRVRGFTRDINGQKYFIDHDINSIQNYIAKDILNLYHAIDVNVYQENIFHTKMTLKDFKLNNYLFGVSEEELSDHESASIKDQLRDEMQEIFYGRNVTKV.

The tract at residues 96 to 115 is disordered; it reads LTPESLTGESPGPLPGNKPS. Ser-126 acts as the Schiff-base intermediate with substrate; via pyruvic acid in catalysis. Position 126 is a pyruvic acid (Ser); by autocatalysis (Ser-126). His-131 serves as the catalytic Proton acceptor; for processing activity. The active-site Proton donor; for catalytic activity is the Cys-154.

It belongs to the prokaryotic AdoMetDC family. Type 2 subfamily. In terms of assembly, heterooctamer of four alpha and four beta chains arranged as a tetramer of alpha/beta heterodimers. Requires pyruvate as cofactor. Post-translationally, is synthesized initially as an inactive proenzyme. Formation of the active enzyme involves a self-maturation process in which the active site pyruvoyl group is generated from an internal serine residue via an autocatalytic post-translational modification. Two non-identical subunits are generated from the proenzyme in this reaction, and the pyruvate is formed at the N-terminus of the alpha chain, which is derived from the carboxyl end of the proenzyme. The post-translation cleavage follows an unusual pathway, termed non-hydrolytic serinolysis, in which the side chain hydroxyl group of the serine supplies its oxygen atom to form the C-terminus of the beta chain, while the remainder of the serine residue undergoes an oxidative deamination to produce ammonia and the pyruvoyl group blocking the N-terminus of the alpha chain.

The catalysed reaction is S-adenosyl-L-methionine + H(+) = S-adenosyl 3-(methylsulfanyl)propylamine + CO2. The protein operates within amine and polyamine biosynthesis; S-adenosylmethioninamine biosynthesis; S-adenosylmethioninamine from S-adenosyl-L-methionine: step 1/1. Catalyzes the decarboxylation of S-adenosylmethionine to S-adenosylmethioninamine (dcAdoMet), the propylamine donor required for the synthesis of the polyamines spermine and spermidine from the diamine putrescine. The sequence is that of S-adenosylmethionine decarboxylase proenzyme from Alkaliphilus metalliredigens (strain QYMF).